The sequence spans 158 residues: Small ribosomal subunit protein uS7 (158 aa).

It belongs to the universal ribosomal protein uS7 family. As to quaternary structure, part of the 30S ribosomal subunit. Contacts proteins S9 and S11.

Its function is as follows. One of the primary rRNA binding proteins, it binds directly to 16S rRNA where it nucleates assembly of the head domain of the 30S subunit. Is located at the subunit interface close to the decoding center, probably blocks exit of the E-site tRNA. The sequence is that of Small ribosomal subunit protein uS7 from Porphyromonas gingivalis (strain ATCC 33277 / DSM 20709 / CIP 103683 / JCM 12257 / NCTC 11834 / 2561).